Consider the following 882-residue polypeptide: DNA mismatch repair protein MutS (882 aa).

Residue 626–633 (GPNMAGKS) coordinates ATP.

Belongs to the DNA mismatch repair MutS family.

This protein is involved in the repair of mismatches in DNA. It is possible that it carries out the mismatch recognition step. This protein has a weak ATPase activity. This chain is DNA mismatch repair protein MutS, found in Anaeromyxobacter sp. (strain Fw109-5).